The chain runs to 424 residues: Serine--tRNA ligase (424 aa).

229-231 (TAE) lines the L-serine pocket. 260–262 (RSE) lines the ATP pocket. Residue E283 coordinates L-serine. 347 to 350 (EISS) serves as a coordination point for ATP. An L-serine-binding site is contributed by S383.

Belongs to the class-II aminoacyl-tRNA synthetase family. Type-1 seryl-tRNA synthetase subfamily. In terms of assembly, homodimer. The tRNA molecule binds across the dimer.

The protein localises to the cytoplasm. It carries out the reaction tRNA(Ser) + L-serine + ATP = L-seryl-tRNA(Ser) + AMP + diphosphate + H(+). The enzyme catalyses tRNA(Sec) + L-serine + ATP = L-seryl-tRNA(Sec) + AMP + diphosphate + H(+). Its pathway is aminoacyl-tRNA biosynthesis; selenocysteinyl-tRNA(Sec) biosynthesis; L-seryl-tRNA(Sec) from L-serine and tRNA(Sec): step 1/1. Functionally, catalyzes the attachment of serine to tRNA(Ser). Is also able to aminoacylate tRNA(Sec) with serine, to form the misacylated tRNA L-seryl-tRNA(Sec), which will be further converted into selenocysteinyl-tRNA(Sec). This Gluconacetobacter diazotrophicus (strain ATCC 49037 / DSM 5601 / CCUG 37298 / CIP 103539 / LMG 7603 / PAl5) protein is Serine--tRNA ligase.